The primary structure comprises 1714 residues: Latrophilin Cirl (1714 aa).

At 1-765 the chain is on the extracellular side; the sequence is MSSIDISGRY…LFTMFDGNMR (765 aa). One can recognise an SUEL-type lectin domain in the interval 26-115; it reads ACEGKKLTIE…KYLEAHYQCI (90 aa). N-linked (GlcNAc...) asparagine glycosylation is present at N143. The tract at residues 183-302 is disordered; the sequence is PPHTVTHSTP…GSPASGNNSV (120 aa). Over residues 186 to 198 the composition is skewed to low complexity; it reads TVTHSTPSSSTVP. A compositionally biased stretch (polar residues) spans 244 to 262; the sequence is PSSKLPSAGNATAPSNTRI. N253 is a glycosylation site (N-linked (GlcNAc...) asparagine). Composition is skewed to low complexity over residues 272–282 and 290–301; these read DDGTLLTTKSS and ASNGSPASGNNS. 6 N-linked (GlcNAc...) asparagine glycosylation sites follow: N299, N338, N395, N652, N701, and N728. Residues 373–397 form a disordered region; it reads YDEYDDDPSSTTPAPSGGDCLHNSS. The 195-residue stretch at 558–752 folds into the GAIN-B domain; the sequence is RSVVQKVKNI…AILMDVVDEH (195 aa). 2 disulfide bridges follow: C707-C734 and C722-C736. Residues 707–752 are GPS; that stretch reads CVFWNYIDHAWSANGCSLESTNRTHSVCSCNHLTNFAILMDVVDEH. Residues 766-786 traverse the membrane as a helical segment; it reads VFIYISIAICVVFIVIALLTL. The Cytoplasmic segment spans residues 787 to 799; the sequence is KLFNGVFVKSART. A helical transmembrane segment spans residues 800–820; that stretch reads TIYTSIYVCLLAIELLFLLGI. Residues 821 to 826 are Extracellular-facing; the sequence is EQTETS. A helical membrane pass occupies residues 827-847; sequence IFCGFITVFLHCAILSGAAWF. The Cytoplasmic portion of the chain corresponds to 848–873; the sequence is CYEAFHSYYTLTSDELLVEVDQTPKV. Residues 874–894 traverse the membrane as a helical segment; sequence NWYYLLSYGLSVSVVAISVAI. At 895-911 the chain is on the extracellular side; that stretch reads NPSTYTQNDYCVLMEAN. Residues 912–932 traverse the membrane as a helical segment; the sequence is ILFYATFVAPVLIFFVAAIGY. The Cytoplasmic portion of the chain corresponds to 933–966; that stretch reads TFLSWIIMCRKSCTGLKTKEHTRLASVRFDIRCS. A helical transmembrane segment spans residues 967 to 987; it reads FVFLLLLSAVWCSAYFYLRGA. Residues 988 to 994 lie on the Extracellular side of the membrane; the sequence is KTDEDTT. The chain crosses the membrane as a helical span at residues 995 to 1015; sequence TIYGYCFICFNTLLGLYIFVF. Residues 1016 to 1714 are Cytoplasmic-facing; that stretch reads HCIQNEKIRR…VRCYLEPLAK (699 aa). Phosphoserine occurs at positions 1155, 1245, and 1252. Disordered regions lie at residues 1229–1253, 1268–1287, 1293–1354, 1447–1536, and 1551–1694; these read PNSQHGKKKRGGAVPASPSGSLHSR, KTKQGQPSGYPHYAEALDPP, AFYQ…PPPH, GGGS…DERM, and FQRQ…QQRH. Residues 1296–1315 are compositionally biased toward low complexity; it reads QQQQQMRRQQQQQQQQQQQQ. Phosphoserine occurs at positions 1317 and 1318. 2 stretches are compositionally biased toward low complexity: residues 1330 to 1348 and 1453 to 1478; these read LHLQHQQQHQRRVGGQQQL and GGSVSSRSQQQQLQKQQKQQQQQQQR. Composition is skewed to acidic residues over residues 1486–1500 and 1510–1523; these read DDDDDDDEEEDDEAT and CDDDDEEEDSDLDD. Residues 1524–1536 are compositionally biased toward basic and acidic residues; the sequence is DAHKLPPQSDERM. The span at 1565–1580 shows a compositional bias: low complexity; the sequence is GALPPGVAPGAGSAGP. Over residues 1644-1659 the composition is skewed to polar residues; sequence QTPAQKRQQLQKLSPQ. Positions 1660 to 1675 are enriched in low complexity; sequence STTSSSSHTSHSNLQP. Over residues 1679-1693 the composition is skewed to basic residues; it reads PLTHQHPHPPQHQQR.

The protein belongs to the G-protein coupled receptor 2 family. LN-TM7 subfamily. As to quaternary structure, forms a heterodimer, consisting of a large extracellular region non-covalently linked to a seven-transmembrane moiety. Proteolytically cleaved into 2 subunits, an extracellular subunit and a seven-transmembrane subunit.

It localises to the cell membrane. This Drosophila ananassae (Fruit fly) protein is Latrophilin Cirl.